The sequence spans 444 residues: Methylenetetrahydrofolate--tRNA-(uracil-5-)-methyltransferase TrmFO (444 aa).

Residue 11–16 (GGGLAG) participates in FAD binding.

This sequence belongs to the MnmG family. TrmFO subfamily. FAD serves as cofactor.

The protein localises to the cytoplasm. The enzyme catalyses uridine(54) in tRNA + (6R)-5,10-methylene-5,6,7,8-tetrahydrofolate + NADH + H(+) = 5-methyluridine(54) in tRNA + (6S)-5,6,7,8-tetrahydrofolate + NAD(+). It catalyses the reaction uridine(54) in tRNA + (6R)-5,10-methylene-5,6,7,8-tetrahydrofolate + NADPH + H(+) = 5-methyluridine(54) in tRNA + (6S)-5,6,7,8-tetrahydrofolate + NADP(+). Catalyzes the folate-dependent formation of 5-methyl-uridine at position 54 (M-5-U54) in all tRNAs. The chain is Methylenetetrahydrofolate--tRNA-(uracil-5-)-methyltransferase TrmFO from Desulfotalea psychrophila (strain LSv54 / DSM 12343).